The following is a 338-amino-acid chain: MDELPILPTTVIGSYPRPKWLREAIRLHKAGKISDEDLQEAFDDAVVTVLHDHEIAGVDVPTDGEMRRDEMVEFFAERLAGFKFYGPVRVWGTNYYRKPSVVSKVEYIKPMLVDEFLFAKSVSYTENLKITITGPYTIAEWSYNEYYKSKKDLAFDLAKVINSEMKKLVEAGAKIIQVDEPAIHTHKNEVEWAIEAVNESIKGINVKVVMHVCYGEYSYLEPYLDKLNVDQINLALKNYNYEPVKLFKKWDREIGVGVIDVHNKRIETPEEVANDLKMLLDYFKPEMIWVNPDCGLKLLPRKIAFQKLLNMVKGTKIVREELKNKGYNSTSLKPLVNR.

The Zn(2+) site is built by histidine 211, cysteine 213, and cysteine 294.

It belongs to the archaeal MetE family. Zn(2+) is required as a cofactor.

It participates in amino-acid biosynthesis; L-methionine biosynthesis via de novo pathway. In terms of biological role, catalyzes the transfer of a methyl group to L-homocysteine resulting in methionine formation. The physiological methyl donor is unknown. The sequence is that of Methionine synthase from Sulfurisphaera tokodaii (strain DSM 16993 / JCM 10545 / NBRC 100140 / 7) (Sulfolobus tokodaii).